We begin with the raw amino-acid sequence, 175 residues long: Large ribosomal subunit protein uL10 (175 aa).

The protein belongs to the universal ribosomal protein uL10 family. As to quaternary structure, part of the ribosomal stalk of the 50S ribosomal subunit. The N-terminus interacts with L11 and the large rRNA to form the base of the stalk. The C-terminus forms an elongated spine to which L12 dimers bind in a sequential fashion forming a multimeric L10(L12)X complex.

Its function is as follows. Forms part of the ribosomal stalk, playing a central role in the interaction of the ribosome with GTP-bound translation factors. This Synechococcus sp. (strain CC9902) protein is Large ribosomal subunit protein uL10.